Reading from the N-terminus, the 105-residue chain is Putative membrane protein insertion efficiency factor (105 aa).

It belongs to the UPF0161 family.

The protein resides in the cell membrane. Its function is as follows. Could be involved in insertion of integral membrane proteins into the membrane. The polypeptide is Putative membrane protein insertion efficiency factor (Bifidobacterium longum subsp. infantis (strain ATCC 15697 / DSM 20088 / JCM 1222 / NCTC 11817 / S12)).